A 77-amino-acid polypeptide reads, in one-letter code: Conotoxin Ar5.1 a (77 aa).

The signal sequence occupies residues 1 to 19 (MLCLPVFIILLLLASPAAS). The propeptide occupies 20–44 (NPLETRIQSDLIRAALEDADMKNEK).

Belongs to the conotoxin T superfamily. Post-translationally, contains 2 disulfide bonds that can be either 'C1-C3, C2-C4' or 'C1-C4, C2-C3', since these disulfide connectivities have been observed for conotoxins with cysteine framework V (for examples, see AC P0DQQ7 and AC P81755). As to expression, expressed by the venom duct.

The protein resides in the secreted. This chain is Conotoxin Ar5.1 a, found in Conus arenatus (Sand-dusted cone).